Reading from the N-terminus, the 214-residue chain is Fibroblast growth factor 8 (214 aa).

Residues 1–22 form the signal peptide; the sequence is MDPCSSLFSYVFMHLFVLCLQA. N-linked (GlcNAc...) asparagine glycans are attached at residues Asn-31, Asn-137, and Asn-207.

The protein belongs to the heparin-binding growth factors family.

The protein localises to the secreted. In terms of biological role, plays an important role in the regulation of embryonic development, cell proliferation, cell differentiation and cell migration. Involved in initiation, outgrowth and patterning of the limbs. This is Fibroblast growth factor 8 (FGF8) from Gallus gallus (Chicken).